The chain runs to 757 residues: Xaa-Pro dipeptidyl-peptidase (757 aa).

Residues Ser-348, Asp-468, and His-498 each act as charge relay system in the active site.

This sequence belongs to the peptidase S15 family. Homodimer.

It localises to the cytoplasm. It carries out the reaction Hydrolyzes Xaa-Pro-|- bonds to release unblocked, N-terminal dipeptides from substrates including Ala-Pro-|-p-nitroanilide and (sequentially) Tyr-Pro-|-Phe-Pro-|-Gly-Pro-|-Ile.. Its function is as follows. Removes N-terminal dipeptides sequentially from polypeptides having unsubstituted N-termini provided that the penultimate residue is proline. This Streptococcus pneumoniae (strain ATCC BAA-255 / R6) protein is Xaa-Pro dipeptidyl-peptidase.